We begin with the raw amino-acid sequence, 128 residues long: MAKDYSRTQRIGDQMQRELAQLIQREIKDPRLGLVTITGVEVSRDVAHAKVFITVMGQDDAERVALNMEILNDAAGYLRMLLGKSMKLRSVPQLHFHYDESIRRGAELSALIERAVAEDRRHGDESED.

Belongs to the RbfA family. Monomer. Binds 30S ribosomal subunits, but not 50S ribosomal subunits or 70S ribosomes.

Its subcellular location is the cytoplasm. Its function is as follows. One of several proteins that assist in the late maturation steps of the functional core of the 30S ribosomal subunit. Associates with free 30S ribosomal subunits (but not with 30S subunits that are part of 70S ribosomes or polysomes). Required for efficient processing of 16S rRNA. May interact with the 5'-terminal helix region of 16S rRNA. The sequence is that of Ribosome-binding factor A from Pseudomonas paraeruginosa (strain DSM 24068 / PA7) (Pseudomonas aeruginosa (strain PA7)).